Consider the following 260-residue polypeptide: Global transcriptional regulator CodY (260 aa).

The GAF domain stretch occupies residues 1-159 (MPNLLEKTRK…SSTVVGIQLL (159 aa)). The H-T-H motif DNA-binding region spans 207-226 (ASVIADRIGITRSVIVNALR).

Belongs to the CodY family.

It is found in the cytoplasm. In terms of biological role, DNA-binding global transcriptional regulator which is involved in the adaptive response to starvation and acts by directly or indirectly controlling the expression of numerous genes in response to nutrient availability. During rapid exponential growth, CodY is highly active and represses genes whose products allow adaptation to nutrient depletion. This Streptococcus pyogenes serotype M3 (strain SSI-1) protein is Global transcriptional regulator CodY.